Reading from the N-terminus, the 381-residue chain is MWRSLGLALALCLLPLGGTESQDQSSLCKQPPAWSIRDQGPMLNSNGSVTVVALLQASUYLCILQASKLEDLRVKLKKEGYSNISHIVVNHQGISSRLKYTHLKNKVSEHIPVYQQEENQTDVWTLLNGSKDDFLIYDRCGRLVYHLGLPFSFLTFPYVEEAVKIAYCEKKCGYCSLTTLKDEDFCKSVSLATVDKTVEAPSPHYHHEHHHNHRHQHLGSSELSENQQPGAPDAPTHPAPPGLHHHHKHKGQHRQGHPENRDMPGSEDIQDLQKKLCRKRCINQLLCKLPKDSELAPRSCCCHCRHLIFEKTGSAITUQCKENLPSLCSUQGLRAEENITESCQURLPPPAUQISQQLIPTEASTSURUKNQAKKUEUPSN.

The N-terminal stretch at 1–19 (MWRSLGLALALCLLPLGGT) is a signal peptide. Asparagine 46 carries N-linked (GlcNAc...) asparagine glycosylation. Residue selenocysteine 59 is a non-standard amino acid, selenocysteine. 3 N-linked (GlcNAc...) asparagine glycosylation sites follow: asparagine 83, asparagine 119, and asparagine 128. Residues 202 to 268 (SPHYHHEHHH…ENRDMPGSED (67 aa)) are disordered. Positions 204-217 (HYHHEHHHNHRHQH) are enriched in basic residues. The span at 218–229 (LGSSELSENQQP) shows a compositional bias: polar residues. Residues 243–255 (LHHHHKHKGQHRQ) are compositionally biased toward basic residues. Serine 266 carries the post-translational modification Phosphoserine. 2 non-standard amino acids (selenocysteine) are found at residues selenocysteine 318 and selenocysteine 330. Asparagine 338 carries an N-linked (GlcNAc...) asparagine glycan. Non-standard amino acids (selenocysteine) are located at selenocysteine 345, selenocysteine 352, selenocysteine 367, selenocysteine 369, selenocysteine 376, and selenocysteine 378. Residues 352 to 381 (UQISQQLIPTEASTSURUKNQAKKUEUPSN) form a disordered region. The span at 353–369 (QISQQLIPTEASTSURU) shows a compositional bias: polar residues.

This sequence belongs to the selenoprotein P family. Post-translationally, phosphorylation sites are present in the extracellular medium.

The protein resides in the secreted. Its function is as follows. Might be responsible for some of the extracellular antioxidant defense properties of selenium or might be involved in the transport of selenium. May supply selenium to tissues such as brain and testis. The protein is Selenoprotein P of Pongo abelii (Sumatran orangutan).